Here is a 492-residue protein sequence, read N- to C-terminus: N-succinylglutamate 5-semialdehyde dehydrogenase (492 aa).

Residue 220–225 (GSASTG) coordinates NAD(+). Active-site residues include Glu243 and Cys277.

The protein belongs to the aldehyde dehydrogenase family. AstD subfamily.

It carries out the reaction N-succinyl-L-glutamate 5-semialdehyde + NAD(+) + H2O = N-succinyl-L-glutamate + NADH + 2 H(+). It functions in the pathway amino-acid degradation; L-arginine degradation via AST pathway; L-glutamate and succinate from L-arginine: step 4/5. In terms of biological role, catalyzes the NAD-dependent reduction of succinylglutamate semialdehyde into succinylglutamate. The polypeptide is N-succinylglutamate 5-semialdehyde dehydrogenase (Salmonella typhimurium (strain LT2 / SGSC1412 / ATCC 700720)).